Consider the following 131-residue polypeptide: uncharacterized protein (131 aa).

The next 2 helical transmembrane spans lie at 5–25 and 34–54; these read VQPI…YVLV and MAVT…YVMN. Residues 62–131 are disordered; that stretch reads AAFKKAAKQS…KNKKKNRALF (70 aa). Basic residues-rich tracts occupy residues 66-92 and 122-131; these read KAAK…RVSH and KNKKKNRALF.

It is found in the cell membrane. This is an uncharacterized protein from Bacillus subtilis (strain 168).